The sequence spans 165 residues: Large ribosomal subunit protein uL10 (165 aa).

It belongs to the universal ribosomal protein uL10 family. In terms of assembly, part of the ribosomal stalk of the 50S ribosomal subunit. The N-terminus interacts with L11 and the large rRNA to form the base of the stalk. The C-terminus forms an elongated spine to which L12 dimers bind in a sequential fashion forming a multimeric L10(L12)X complex.

Forms part of the ribosomal stalk, playing a central role in the interaction of the ribosome with GTP-bound translation factors. The sequence is that of Large ribosomal subunit protein uL10 from Shewanella halifaxensis (strain HAW-EB4).